Here is a 398-residue protein sequence, read N- to C-terminus: Ubiquitin-like modifier-activating enzyme 5 (398 aa).

Residues Gly76, Asp97, Lys120, Asn143, and Asn177 each coordinate ATP. Residues Cys219 and Cys222 each contribute to the Zn(2+) site. The active-site Glycyl thioester intermediate is the Cys243. Zn(2+) contacts are provided by Cys296 and Cys301.

The protein belongs to the ubiquitin-activating E1 family. UBA5 subfamily.

Functionally, E1-like enzyme which activates UFM1. The sequence is that of Ubiquitin-like modifier-activating enzyme 5 from Drosophila grimshawi (Hawaiian fruit fly).